Here is a 1037-residue protein sequence, read N- to C-terminus: Protein brain tumor (1037 aa).

Disordered stretches follow at residues 29–63 (SDSPLTLSGSSPPASDSAICSDEYTGGSSVKSRSE) and 159–178 (SNSSSNSSSSNTSANGSPPR). 2 stretches are compositionally biased toward polar residues: residues 31–42 (SPLTLSGSSPPA) and 54–63 (GGSSVKSRSE). Residues 159–175 (SNSSSNSSSSNTSANGS) show a composition bias toward low complexity. The B box-type 1; atypical zinc finger occupies 174–222 (GSPPRCTACKSKCSDAVAKCFECQSYLCANCVTAHEFMHCFNGHNVCLI). Residues cysteine 179, cysteine 182, cysteine 204, histidine 208, cysteine 328, histidine 331, cysteine 351, and histidine 356 each contribute to the Zn(2+) site. Residues 323 to 366 (QRQLFCPRHKQELLKFSCRTCCILVCKECIVLEHSTGLHELENV) form a B box-type 2 zinc finger. Residues 543 to 554 (GPTGMSLTSNGH) show a composition bias toward polar residues. The disordered stretch occupies residues 543–606 (GPTGMSLTSN…TAHHQQLQAQ (64 aa)). The segment covering 565–577 (QSASNSSASSAGS) has biased composition (low complexity). Basic residues predominate over residues 579 to 598 (HHGHHQQSHHHGHHNHHQTA). NHL repeat units lie at residues 767–810 (HCKF…FDKE), 814–859 (KFQF…YNQY), 860–901 (GQFV…FDQN), 902–944 (GNVL…FNYE), and 945–988 (GQYL…FTQD).

Interacts with nanos (nos) and pum. Acts via the formation of a quaternary complex composed of pum, nanos, brat and the 3'-UTR mRNA of hb. Not recruited by nanos and pum to cyclin B 3'-UTR mRNA. Might interact with mira; the interaction seems to be important for brat localization during mitosis. Interacts with Ago1. In terms of tissue distribution, expressed during embryogenesis, mainly in nervous tissues. Expressed in the embryonic central and peripheral nervous systems including the embryonic brain. In third instar larva it is expressed in the larval central nervous system including the brain and the ventral ganglion, in two glands (the ring gland and the salivary gland, and in parts of the foregut) the gastric caeca and the proventriculus.

The protein resides in the cytoplasm. Its subcellular location is the cell cortex. Its function is as follows. An NHL-domain family protein that functions as a translational repressor to inhibit cell proliferation. Plays a central role in translation repression of hb mRNA by being recruited by nanos (nos) and pum to the Nanos Response Element (NRE), a 16 bp sequence in the hb mRNA 3'-UTR. Probably recruited by other proteins to repress translation of other mRNAs in other tissues. Negatively regulates expression of Myc in a 3'-UTR dependent manner in both neural progenitor and epithelial cells. Regulates expression of mei-P26, possibly at transcriptional level. Involved in the regulation of ribosomal RNA synthesis and cell growth. Participates in abdominal segmentation and imaginal disk development. During neuroblast division, segregates asymmetrically and inhibits self-renewal of one of the two daughter cells. Together with the asymmetrically segregating transcription factor prospero ensures that the daughter cell will stop growing, exit the cell cycle, and differentiate into neurons possibly by modulating the function of dm in ganglion mother cells (GMC). Restricts developmental potential of type II intermediary neuronal progenitor (INP) cells playing a role in proliferation and maturation of the neuroblasts. This chain is Protein brain tumor, found in Drosophila melanogaster (Fruit fly).